A 459-amino-acid polypeptide reads, in one-letter code: Cysteine--tRNA ligase (459 aa).

Cys31 contacts Zn(2+). The 'HIGH' region signature appears at 33 to 43 (PTVYYNPHIGN). Zn(2+)-binding residues include Cys216, His241, and Glu245. The 'KMSKS' region motif lies at 274–278 (KMSKS). Lys277 is an ATP binding site.

It belongs to the class-I aminoacyl-tRNA synthetase family. In terms of assembly, monomer. Zn(2+) serves as cofactor.

It localises to the cytoplasm. It catalyses the reaction tRNA(Cys) + L-cysteine + ATP = L-cysteinyl-tRNA(Cys) + AMP + diphosphate. This Rickettsia peacockii (strain Rustic) protein is Cysteine--tRNA ligase.